The following is a 179-amino-acid chain: 6,7-dimethyl-8-ribityllumazine synthase (179 aa).

5-amino-6-(D-ribitylamino)uracil contacts are provided by residues tryptophan 13, alanine 45–glutamate 47, and valine 68–isoleucine 70. Aspartate 73–threonine 74 serves as a coordination point for (2S)-2-hydroxy-3-oxobutyl phosphate. The active-site Proton donor is histidine 76. Residue phenylalanine 101 participates in 5-amino-6-(D-ribitylamino)uracil binding. Arginine 115 contributes to the (2S)-2-hydroxy-3-oxobutyl phosphate binding site. The disordered stretch occupies residues alanine 157–lysine 179.

This sequence belongs to the DMRL synthase family.

It catalyses the reaction (2S)-2-hydroxy-3-oxobutyl phosphate + 5-amino-6-(D-ribitylamino)uracil = 6,7-dimethyl-8-(1-D-ribityl)lumazine + phosphate + 2 H2O + H(+). The protein operates within cofactor biosynthesis; riboflavin biosynthesis; riboflavin from 2-hydroxy-3-oxobutyl phosphate and 5-amino-6-(D-ribitylamino)uracil: step 1/2. In terms of biological role, catalyzes the formation of 6,7-dimethyl-8-ribityllumazine by condensation of 5-amino-6-(D-ribitylamino)uracil with 3,4-dihydroxy-2-butanone 4-phosphate. This is the penultimate step in the biosynthesis of riboflavin. The sequence is that of 6,7-dimethyl-8-ribityllumazine synthase from Bdellovibrio bacteriovorus (strain ATCC 15356 / DSM 50701 / NCIMB 9529 / HD100).